A 139-amino-acid chain; its full sequence is Translation initiation factor 5A (139 aa).

Hypusine is present on Lys-36.

It belongs to the eIF-5A family.

It is found in the cytoplasm. Functions by promoting the formation of the first peptide bond. In Aeropyrum pernix (strain ATCC 700893 / DSM 11879 / JCM 9820 / NBRC 100138 / K1), this protein is Translation initiation factor 5A (eif5a).